Consider the following 848-residue polypeptide: DNA mismatch repair protein MutS (848 aa).

An ATP-binding site is contributed by Gly-605 to Ser-612.

The protein belongs to the DNA mismatch repair MutS family.

Its function is as follows. This protein is involved in the repair of mismatches in DNA. It is possible that it carries out the mismatch recognition step. This protein has a weak ATPase activity. This Leptospira borgpetersenii serovar Hardjo-bovis (strain JB197) protein is DNA mismatch repair protein MutS.